The primary structure comprises 103 residues: U-scoloptoxin(24)-Er1a (103 aa).

The first 23 residues, 1–23, serve as a signal peptide directing secretion; sequence MVKSLHCLIGIVLFLAILNAGNG.

Belongs to the scoloptoxin-24 family. Contains 1 disulfide bond. As to expression, expressed by the venom gland.

The protein resides in the secreted. This Ethmostigmus rubripes (Giant centipede) protein is U-scoloptoxin(24)-Er1a.